Consider the following 888-residue polypeptide: MEPFKYICHYWGKSSKSLTKGNDIHLLIYHCLDVAAVADCWWDQSVVLQNTFCRNEMLSKQRVKAWLLFFIALHDIGKFDIRFQYKSAESWLKLNPATPSLNGPSTQMCRKFNHGAAGLYWFNQDSLSEQSLGDFFSFFDAAPHPYESWFPWVEAVTGHHGFILHSQDQDKSRWEMPASLASYAAQDKQAREEWISVLEALFLTPAGLSINDIPPDCSSLLAGFCSLADWLGSWTTTNTFLFNEDAPSDINALRTYFQDRQQDASRVLELSGLVSNKRCYEGVHALLDNGYQPRQLQVLVDALPVAPGLTVIEAPTGSGKTETALAYAWKLIDQQIADSVIFALPTQATANAMLTRMEASASHLFSSPNLILAHGNSRFNHLFQSIKSRAITEQGQEEAWVQCCQWLSQSNKKVFLGQIGVCTIDQVLISVLPVKHRFIRGLGIGRSVLIVDEVHAYDTYMNGLLEAVLKAQADVGGSVILLSATLPMKQKQKLLDTYGLHTDPVENNSAYPLINWRGVNGAQRFDLLAHPEQLPPRFSIQPEPICLADMLPDLTMLERMIAAANAGAQVCLICNLVDVAQVCYQRLKELNNTQVDIDLFHARFTLNDRREKENRVISNFGKNGKRNVGRILVATQVVEQSLDVDFDWLITQHCPADLLFQRLGRLHRHHRKYRPAGFEIPVATILLPDGEGYGRHEHIYSNVRVMWRTQQHIEELNGASLFFPDAYRQWLDSIYDDAEMDEPEWVGNGMDKFESAECEKRFKARKVLQWAEEYSLQDNDETILAVTRDGEMSLPLLPYVQTSSGKQLLDGQVYEDLSHEQQYEALALNRVNVPFTWKRSFSEVVDEDGLLWLEGKQNLDGWVWQGNSIVITYTGDEGMTRVIPANPK.

In terms of domain architecture, HD Cas3-type spans 20–231 (KGNDIHLLIY…AGFCSLADWL (212 aa)). The Mg(2+) site is built by Asp-75 and His-160. Positions 301-504 (DALPVAPGLT…LDTYGLHTDP (204 aa)) constitute a Helicase ATP-binding domain. 314 to 321 (APTGSGKT) is a binding site for ATP. The DEAH box signature appears at 452–455 (DEVH). The Helicase C-terminal domain maps to 556 to 735 (MLERMIAAAN…AYRQWLDSIY (180 aa)).

This sequence in the N-terminal section; belongs to the CRISPR-associated nuclease Cas3-HD family. It in the central section; belongs to the CRISPR-associated helicase Cas3 family. Interacts with the CasA subunit of Cascade once Cascade has recognized target DNA. Mg(2+) is required as a cofactor.

Its function is as follows. CRISPR (clustered regularly interspaced short palindromic repeat), is an adaptive immune system that provides protection against mobile genetic elements (viruses, transposable elements and conjugative plasmids). CRISPR clusters contain sequences complementary to antecedent mobile elements and target invading nucleic acids. CRISPR clusters are transcribed and processed into CRISPR RNA (crRNA). Cas3 plus Cascade participate in CRISPR interference, the third stage of CRISPR immunity. In terms of biological role, acts as an endonuclease, a 3'-5'exonuclease, and an ATP-dependent dsDNA helicase. Anneals and unwinds R-loops (in which crRNA binds the target DNA, displacing the noncomplementary strand). Unwinding requires ATP, annealing does not. Required along with the Cascade complex for resistance to bacteriophage lambda infection as well as the ability to cure CRISPR-encoding high-copy number plasmid. A Cas3-CasA fusion protein purified with the Cascade complex nicks target plasmid in the presence but not absence of Mg(2+), and degrades plasmid fully in the presence of Mg(2+) and ATP, suggesting the helicase activity is required for complete degradation. This chain is CRISPR-associated endonuclease/helicase Cas3 (ygcB), found in Escherichia coli (strain K12).